We begin with the raw amino-acid sequence, 248 residues long: Probable transcriptional regulatory protein RHE_CH03475 (248 aa).

This sequence belongs to the TACO1 family.

The protein resides in the cytoplasm. In Rhizobium etli (strain ATCC 51251 / DSM 11541 / JCM 21823 / NBRC 15573 / CFN 42), this protein is Probable transcriptional regulatory protein RHE_CH03475.